Here is a 369-residue protein sequence, read N- to C-terminus: Anhydro-N-acetylmuramic acid kinase (369 aa).

9 to 16 (GTSLDAVD) contacts ATP.

It belongs to the anhydro-N-acetylmuramic acid kinase family.

It carries out the reaction 1,6-anhydro-N-acetyl-beta-muramate + ATP + H2O = N-acetyl-D-muramate 6-phosphate + ADP + H(+). The protein operates within amino-sugar metabolism; 1,6-anhydro-N-acetylmuramate degradation. It participates in cell wall biogenesis; peptidoglycan recycling. Functionally, catalyzes the specific phosphorylation of 1,6-anhydro-N-acetylmuramic acid (anhMurNAc) with the simultaneous cleavage of the 1,6-anhydro ring, generating MurNAc-6-P. Is required for the utilization of anhMurNAc either imported from the medium or derived from its own cell wall murein, and thus plays a role in cell wall recycling. The sequence is that of Anhydro-N-acetylmuramic acid kinase from Phenylobacterium zucineum (strain HLK1).